The primary structure comprises 252 residues: Ribose-5-phosphate isomerase (252 aa).

Belongs to the ribose 5-phosphate isomerase family.

It is found in the cytoplasm. The catalysed reaction is aldehydo-D-ribose 5-phosphate = D-ribulose 5-phosphate. It functions in the pathway carbohydrate degradation; pentose phosphate pathway; D-ribose 5-phosphate from D-ribulose 5-phosphate (non-oxidative stage): step 1/1. The polypeptide is Ribose-5-phosphate isomerase (RKI1) (Debaryomyces hansenii (strain ATCC 36239 / CBS 767 / BCRC 21394 / JCM 1990 / NBRC 0083 / IGC 2968) (Yeast)).